Here is a 192-residue protein sequence, read N- to C-terminus: Elongation factor P (192 aa).

It belongs to the elongation factor P family.

The protein resides in the cytoplasm. It functions in the pathway protein biosynthesis; polypeptide chain elongation. Functionally, involved in peptide bond synthesis. Stimulates efficient translation and peptide-bond synthesis on native or reconstituted 70S ribosomes in vitro. Probably functions indirectly by altering the affinity of the ribosome for aminoacyl-tRNA, thus increasing their reactivity as acceptors for peptidyl transferase. This Borrelia hermsii (strain HS1 / DAH) protein is Elongation factor P.